A 312-amino-acid polypeptide reads, in one-letter code: Zinc-finger homeodomain protein 9 (312 aa).

The tract at residues 1–27 is disordered; that stretch reads MLEVRSMDMTPKSPEPESETPTRIQPA. A Phosphoserine modification is found at serine 13. A ZF-HD dimerization-type; degenerate zinc finger spans residues 52–103; that stretch reads YKECLKNHAAAIGGHALDGCGEFMPSPSSTPSDPTSLKCAACGCHRNFHRRE. 2 disordered regions span residues 128–155 and 253–312; these read QPHHRHHPPPPLAPPLPRSPNSSSPPPI and FSGG…SSSS. Over residues 136–155 the composition is skewed to pro residues; that stretch reads PPPLAPPLPRSPNSSSPPPI. The segment at residues 192-255 is a DNA-binding region (homeobox); that stretch reads RKRFRTKFSS…NNKNSFKFSG (64 aa). The residue at position 273 (serine 273) is a Phosphoserine.

As to quaternary structure, homo- and heterodimer with other ZFHD proteins. Interacts with MIF3; this interaction prevents nuclear localization and DNA-binding to inhibit transcription regulation activity. Binds to ZHD1, ZHD2 and ZHD11. In terms of tissue distribution, mostly expressed in flowers, stems and inflorescence and, to a lower extent, in leaves and stems.

It localises to the nucleus. Functionally, putative transcription factor. This Arabidopsis thaliana (Mouse-ear cress) protein is Zinc-finger homeodomain protein 9 (ZHD9).